The sequence spans 380 residues: GDP-mannose:cellobiosyl-diphosphopolyprenol alpha-mannosyltransferase (380 aa).

Belongs to the glycosyltransferase group 1 family. Glycosyltransferase 4 subfamily.

The enzyme catalyses beta-D-Glc-(1-&gt;4)-alpha-D-Glc-di-trans,octa-cis-undecaprenyl diphosphate + GDP-alpha-D-mannose = alpha-D-Man-(1-&gt;3)-beta-D-Glc-(1-&gt;4)-alpha-D-Glc-1-di-trans,octa-cis-undecaprenyl diphosphate + GDP + H(+). In terms of biological role, involved in the biosynthesis of the exopolysaccharide xanthan, a polymer that is comprised of repeating pentasaccharide units with the structure of a beta-(1,4)-linked D-glucose backbone with trisaccharide side chains composed of mannose-beta-(1,4)-glucuronic acid-beta-(1,2)-mannose attached to alternate glucose residues in the backbone by alpha-(1,3) linkages. Xanthan is involved in pathogenicity but has also been used in a variety of applications as a specialty polymer for commercial applications, including food additives, where they act as viscosifying, stabilizing, emulsifying, or gelling agents. This is GDP-mannose:cellobiosyl-diphosphopolyprenol alpha-mannosyltransferase (gumH) from Xanthomonas oryzae pv. oryzae (strain PXO99A).